The sequence spans 188 residues: Ribosome maturation factor RimM (188 aa).

The PRC barrel domain occupies 93-175 (QDEFYFTDLI…EIEVQGDLSD (83 aa)).

This sequence belongs to the RimM family. Binds ribosomal protein uS19.

Its subcellular location is the cytoplasm. Its function is as follows. An accessory protein needed during the final step in the assembly of 30S ribosomal subunit, possibly for assembly of the head region. Essential for efficient processing of 16S rRNA. May be needed both before and after RbfA during the maturation of 16S rRNA. It has affinity for free ribosomal 30S subunits but not for 70S ribosomes. In Gluconacetobacter diazotrophicus (strain ATCC 49037 / DSM 5601 / CCUG 37298 / CIP 103539 / LMG 7603 / PAl5), this protein is Ribosome maturation factor RimM.